We begin with the raw amino-acid sequence, 1737 residues long: Complement C4 (1737 aa).

The N-terminal stretch at 1–19 (MRLLWGLAWAFSFFASSLQ) is a signal peptide. Cysteines 66 and 95 form a disulfide. Residues N224 and N664 are each glycosylated (N-linked (GlcNAc...) asparagine). C633 and C667 form a disulfide bridge. Positions 674 to 677 (RQKR) are excised as a propeptide. 3 disulfide bridges follow: C700–C726, C701–C733, and C714–C734. The Anaphylatoxin-like domain occupies 700 to 734 (CCQDGMTKLPMARTCEQRAARVPQPACREPFLSCC). Residue N743 is glycosylated (N-linked (GlcNAc...) asparagine). Residues 1005–1008 (CAEQ) constitute a cross-link (isoglutamyl cysteine thioester (Cys-Gln)). N-linked (GlcNAc...) asparagine glycosylation is found at N1323 and N1386. Y1412, Y1414, and Y1416 each carry sulfotyrosine. The propeptide occupies 1443–1446 (RRRR). Cystine bridges form between C1464–C1528, C1576–C1581, C1588–C1666, C1611–C1735, and C1711–C1720. Residues 1588–1735 (CPRQRRSLER…FLQEYSSQGC (148 aa)) enclose the NTR domain. Y1676 carries the post-translational modification Sulfotyrosine.

In absence of complement activation, circulates in blood as a disulfide-linked trimer of an alpha, beta and gamma chain. As to quaternary structure, complement C4b is composed of complement C4b-A, complement C4 beta and complement C4 gamma chains that are associated via disulfide bonds. Non-enzymatic component of the C3 convertase, also named C4bC2b, composed of the serine protease complement C2b (C2), as well as complement C4b. Non-enzymatic component of the C5 convertase, also named C4bC2bC3b, composed of the serine protease complement C2b (C2), complement C3b, as well as complement C4b. In terms of processing, prior to secretion, the single-chain precursor is enzymatically cleaved by plasminogen (PLG) to yield non-identical chains alpha, beta and gamma. During activation of the complement systems, the alpha chain is cleaved into C4a and C4b by different proteases depending on the complement pathway: C4b stays linked to the beta and gamma chains, while C4a is released in the plasma. The alpha chain is cleaved by C1S to generate C4a and C4b following activation by the classical complement system. The alpha chain is cleaved to generate C4a and C4b by MASP2 following activation by the lectin complement system. The alpha chain is cleaved by GZMK to generate C4a and C4b following activation by the GZMK complement system. Further degradation of C4b by C1 into the inactive fragments C4c and C4d blocks the generation of C3 convertase. The proteolytic cleavages often are incomplete so that many structural forms can be found in plasma. Upon activation, the internal thioester bond reacts with carbohydrate antigens on the target surface to form amide or ester bonds, leading to covalent association with the surface of pathogens. Post-translationally, complement C4b interacts with complement C3b via a thioester linkage. In terms of processing, N- and O-glycosylated. O-glycosylated with a core 1 or possibly core 8 glycan.

Its subcellular location is the secreted. It is found in the cell surface. Its function is as follows. Precursor of non-enzymatic components of the classical, lectin and GZMK complement pathways, which consist in a cascade of proteins that leads to phagocytosis and breakdown of pathogens and signaling that strengthens the adaptive immune system. Non-enzymatic component of C3 and C5 convertases. Generated following cleavage by complement proteases (C1S, MASP2 or GZMK, depending on the complement pathway), it covalently attaches to the surface of pathogens, where it acts as an opsonin that marks the surface of antigens for removal. It then recruits the serine protease complement C2b to form the C3 and C5 convertases, which cleave and activate C3 and C5, respectively, the next components of the complement pathways. Complement C4b-A isotype is responsible for effective binding to form amide bonds with immune aggregates or protein antigens, while complement C4b-B isotype catalyzes the transacylation of the thioester carbonyl group to form ester bonds with carbohydrate antigens. In terms of biological role, putative humoral mediator released following cleavage by complement proteases (C1S, MASP2 or GZMK, depending on the complement pathway). While it is strongly similar to anaphylatoxins, its role is unclear. Was reported to act as a mediator of local inflammatory process; however these effects were probably due to contamination with C3a and/C5a anaphylatoxins in biological assays. The polypeptide is Complement C4 (Rattus norvegicus (Rat)).